The chain runs to 407 residues: Zinc finger protein 174 (407 aa).

The segment at 1–20 (MAAKMEITLSSNTEASSKQE) is disordered. Residue Lys-26 forms a Glycyl lysine isopeptide (Lys-Gly) (interchain with G-Cter in SUMO2) linkage. Residues 59–124 (GPQEALSQLR…KEIVTLVEDF (66 aa)) form the SCAN box domain. The segment at 150–270 (GSQLGEQELP…RRQVSSPNAQ (121 aa)) is disordered. A Glycyl lysine isopeptide (Lys-Gly) (interchain with G-Cter in SUMO2) cross-link involves residue Lys-204. Residues 211-221 (PRMRSDNKENP) show a composition bias toward basic and acidic residues. Glycyl lysine isopeptide (Lys-Gly) (interchain with G-Cter in SUMO2) cross-links involve residues Lys-230 and Lys-271. 3 consecutive C2H2-type zinc fingers follow at residues 326 to 348 (YKCDDCGKSFTWNSELKRHKRVH), 354 to 376 (YTCGECGNCFGRQSTLKLHQRIH), and 382 to 405 (YQCGQCGKSFRQSSNLHQHHRLHH).

The protein belongs to the krueppel C2H2-type zinc-finger protein family. Homodimer. Expressed in a variety of organs, but most strongly in adult testis and ovary followed by small intestine, colon, prostate, thymus, spleen, pancreas, skeletal muscle, heart, brain and kidney. Also expressed in umbilical vein endothelial cells, foreskin fibroblast and Hep-G2 cells.

The protein localises to the nucleus. In terms of biological role, transcriptional repressor. The protein is Zinc finger protein 174 (ZNF174) of Homo sapiens (Human).